A 202-amino-acid chain; its full sequence is Probable WRKY transcription factor 59 (202 aa).

A DNA-binding region (WRKY) is located at residues 103–168 (DEKVALDDGY…YEGRHNHPSP (66 aa)).

Belongs to the WRKY group II-c family.

The protein resides in the nucleus. Functionally, transcription factor. Interacts specifically with the W box (5'-(T)TGAC[CT]-3'), a frequently occurring elicitor-responsive cis-acting element. In Arabidopsis thaliana (Mouse-ear cress), this protein is Probable WRKY transcription factor 59 (WRKY59).